The primary structure comprises 337 residues: Putative 4-hydroxythreonine-4-phosphate dehydrogenase (337 aa).

Histidine 172, histidine 216, and histidine 271 together coordinate a divalent metal cation.

This sequence belongs to the PdxA family. In terms of assembly, homodimer. Zn(2+) is required as a cofactor. Mg(2+) serves as cofactor. The cofactor is Co(2+).

The protein resides in the cytoplasm. The catalysed reaction is 4-(phosphooxy)-L-threonine + NAD(+) = 3-amino-2-oxopropyl phosphate + CO2 + NADH. Its pathway is cofactor biosynthesis; pyridoxine 5'-phosphate biosynthesis; pyridoxine 5'-phosphate from D-erythrose 4-phosphate: step 4/5. Its function is as follows. Catalyzes the NAD(P)-dependent oxidation of 4-(phosphooxy)-L-threonine (HTP) into 2-amino-3-oxo-4-(phosphooxy)butyric acid which spontaneously decarboxylates to form 3-amino-2-oxopropyl phosphate (AHAP). The protein is Putative 4-hydroxythreonine-4-phosphate dehydrogenase of Pasteurella multocida (strain Pm70).